A 450-amino-acid chain; its full sequence is UDP-N-acetylmuramoylalanine--D-glutamate ligase (450 aa).

119 to 125 is an ATP binding site; that stretch reads GSNGKTT.

It belongs to the MurCDEF family.

The protein localises to the cytoplasm. The enzyme catalyses UDP-N-acetyl-alpha-D-muramoyl-L-alanine + D-glutamate + ATP = UDP-N-acetyl-alpha-D-muramoyl-L-alanyl-D-glutamate + ADP + phosphate + H(+). It functions in the pathway cell wall biogenesis; peptidoglycan biosynthesis. Functionally, cell wall formation. Catalyzes the addition of glutamate to the nucleotide precursor UDP-N-acetylmuramoyl-L-alanine (UMA). This Streptococcus pneumoniae (strain Hungary19A-6) protein is UDP-N-acetylmuramoylalanine--D-glutamate ligase.